The following is a 535-amino-acid chain: 4-hydroxy-3-methylbut-2-enyl diphosphate reductase, apicoplast (535 aa).

C231 contacts [4Fe-4S] cluster. (2E)-4-hydroxy-3-methylbut-2-enyl diphosphate-binding residues include H260 and H293. Dimethylallyl diphosphate-binding residues include H260 and H293. H260 and H293 together coordinate isopentenyl diphosphate. C315 is a binding site for [4Fe-4S] cluster. H343 is a (2E)-4-hydroxy-3-methylbut-2-enyl diphosphate binding site. H343 is a binding site for dimethylallyl diphosphate. H343 serves as a coordination point for isopentenyl diphosphate. Residue E345 is the Proton donor of the active site. Residue T383 coordinates (2E)-4-hydroxy-3-methylbut-2-enyl diphosphate. C413 is a binding site for [4Fe-4S] cluster. Residues S441, S442, N443, and S485 each coordinate (2E)-4-hydroxy-3-methylbut-2-enyl diphosphate. Residues S441, S442, N443, and S485 each contribute to the dimethylallyl diphosphate site. 4 residues coordinate isopentenyl diphosphate: S441, S442, N443, and S485.

The protein belongs to the IspH family. As to quaternary structure, interacts with Fd/ferredoxin. It depends on [4Fe-4S] cluster as a cofactor.

It localises to the plastid. The protein localises to the apicoplast. The catalysed reaction is dimethylallyl diphosphate + 2 oxidized [2Fe-2S]-[ferredoxin] + H2O = (2E)-4-hydroxy-3-methylbut-2-enyl diphosphate + 2 reduced [2Fe-2S]-[ferredoxin] + 2 H(+). It carries out the reaction isopentenyl diphosphate + 2 oxidized [2Fe-2S]-[ferredoxin] + H2O = (2E)-4-hydroxy-3-methylbut-2-enyl diphosphate + 2 reduced [2Fe-2S]-[ferredoxin] + 2 H(+). The protein operates within isoprenoid biosynthesis; dimethylallyl diphosphate biosynthesis; dimethylallyl diphosphate from (2E)-4-hydroxy-3-methylbutenyl diphosphate: step 1/1. It functions in the pathway isoprenoid biosynthesis; isopentenyl diphosphate biosynthesis via DXP pathway; isopentenyl diphosphate from 1-deoxy-D-xylulose 5-phosphate: step 6/6. Functionally, catalyzes the conversion of 1-hydroxy-2-methyl-2-(E)-butenyl 4-diphosphate (HMBPP) into a mixture of isopentenyl diphosphate (IPP) and dimethylallyl diphosphate (DMAPP). Acts in the terminal step of the DOXP/MEP pathway for isoprenoid precursor biosynthesis. This Plasmodium falciparum (isolate 3D7) protein is 4-hydroxy-3-methylbut-2-enyl diphosphate reductase, apicoplast.